A 111-amino-acid polypeptide reads, in one-letter code: Cytochrome c oxidase subunit 6A1, mitochondrial (111 aa).

The transit peptide at 1–26 (MASAVLSASRVSGLLGRALPRVGRPM) directs the protein to the mitochondrion. At 27–36 (SSGAHGEEGS) the chain is on the mitochondrial matrix side. Residues 37–61 (ARIWKALTYFVALPGVGVSMLNVFL) traverse the membrane as a helical segment. At 62–111 (KSRHEEHERPEFVAYPHLRIRTKPFPWGDGNHTLFHNPHMNPLPTGYEDE) the chain is on the mitochondrial intermembrane side.

Belongs to the cytochrome c oxidase subunit 6A family. In terms of assembly, component of the cytochrome c oxidase (complex IV, CIV), a multisubunit enzyme composed of 14 subunits. The complex is composed of a catalytic core of 3 subunits MT-CO1, MT-CO2 and MT-CO3, encoded in the mitochondrial DNA, and 11 supernumerary subunits COX4I, COX5A, COX5B, COX6A, COX6B, COX6C, COX7A, COX7B, COX7C, COX8 and NDUFA4, which are encoded in the nuclear genome. The complex exists as a monomer or a dimer and forms supercomplexes (SCs) in the inner mitochondrial membrane with NADH-ubiquinone oxidoreductase (complex I, CI) and ubiquinol-cytochrome c oxidoreductase (cytochrome b-c1 complex, complex III, CIII), resulting in different assemblies (supercomplex SCI(1)III(2)IV(1) and megacomplex MCI(2)III(2)IV(2)).

Its subcellular location is the mitochondrion inner membrane. It functions in the pathway energy metabolism; oxidative phosphorylation. Functionally, component of the cytochrome c oxidase, the last enzyme in the mitochondrial electron transport chain which drives oxidative phosphorylation. The respiratory chain contains 3 multisubunit complexes succinate dehydrogenase (complex II, CII), ubiquinol-cytochrome c oxidoreductase (cytochrome b-c1 complex, complex III, CIII) and cytochrome c oxidase (complex IV, CIV), that cooperate to transfer electrons derived from NADH and succinate to molecular oxygen, creating an electrochemical gradient over the inner membrane that drives transmembrane transport and the ATP synthase. Cytochrome c oxidase is the component of the respiratory chain that catalyzes the reduction of oxygen to water. Electrons originating from reduced cytochrome c in the intermembrane space (IMS) are transferred via the dinuclear copper A center (CU(A)) of subunit 2 and heme A of subunit 1 to the active site in subunit 1, a binuclear center (BNC) formed by heme A3 and copper B (CU(B)). The BNC reduces molecular oxygen to 2 water molecules unsing 4 electrons from cytochrome c in the IMS and 4 protons from the mitochondrial matrix. The protein is Cytochrome c oxidase subunit 6A1, mitochondrial (Cox6a1) of Rattus norvegicus (Rat).